Here is a 200-residue protein sequence, read N- to C-terminus: Early E1A 21 kDa protein (200 aa).

The segment at 78-98 (QDSTTATSAEEPSASTDSISS) is disordered. Residues 114–118 (LRCYE) carry the LXCXE motif, interaction with host RB1 motif. A zinc finger lies at 136–151 (CSTCGGHEVNGFCSLC). The Nuclear localization signal signature appears at 196–200 (SRHDE).

As to quaternary structure, interaction with host RB1 induces the aberrant dissociation of RB1-E2F1 complex thereby disrupting RB1's activity.

Its function is as follows. E1A protein has both transforming and trans-activating activities. Plays a role in viral genome replication by driving entry of quiescent cells into the cell cycle. Disrupts the function of host retinoblastoma protein RB1/pRb and isoform early E1A 26 kDa protein stabilizes TP53, which are key regulators of the cell cycle. Induces the disassembly of the E2F1 transcription factors from RB1 by direct competition for the same binding site on RB1, with subsequent transcriptional activation of E2F1-regulated S-phase genes. Inactivation of the ability of RB1 to arrest the cell cycle is critical for cellular transformation, uncontrolled cellular growth and proliferation induced by viral infection. Stimulation of progression from G1 to S phase allows the virus to efficiently use the cellular DNA replicating machinery to achieve viral genome replication. The protein is Early E1A 21 kDa protein of Murine adenovirus A serotype 1 (MAdV-1).